Consider the following 199-residue polypeptide: NADH-quinone oxidoreductase subunit C (199 aa).

This sequence belongs to the complex I 30 kDa subunit family. In terms of assembly, NDH-1 is composed of 14 different subunits. Subunits NuoB, C, D, E, F, and G constitute the peripheral sector of the complex.

The protein resides in the cell inner membrane. The enzyme catalyses a quinone + NADH + 5 H(+)(in) = a quinol + NAD(+) + 4 H(+)(out). Functionally, NDH-1 shuttles electrons from NADH, via FMN and iron-sulfur (Fe-S) centers, to quinones in the respiratory chain. The immediate electron acceptor for the enzyme in this species is believed to be ubiquinone. Couples the redox reaction to proton translocation (for every two electrons transferred, four hydrogen ions are translocated across the cytoplasmic membrane), and thus conserves the redox energy in a proton gradient. The polypeptide is NADH-quinone oxidoreductase subunit C (Rhodobacter capsulatus (Rhodopseudomonas capsulata)).